We begin with the raw amino-acid sequence, 128 residues long: Large ribosomal subunit protein mL51 (128 aa).

The N-terminal 31 residues, 1 to 31 (MAGNLLSGAGRRLWDWVPLACRSFSLGVPRL), are a transit peptide targeting the mitochondrion.

It belongs to the mitochondrion-specific ribosomal protein mL51 family. In terms of assembly, component of the mitochondrial large ribosomal subunit (mt-LSU). Mature mammalian 55S mitochondrial ribosomes consist of a small (28S) and a large (39S) subunit. The 28S small subunit contains a 12S ribosomal RNA (12S mt-rRNA) and 30 different proteins. The 39S large subunit contains a 16S rRNA (16S mt-rRNA), a copy of mitochondrial valine transfer RNA (mt-tRNA(Val)), which plays an integral structural role, and 52 different proteins. Interacts with OXA1L.

It localises to the mitochondrion. This chain is Large ribosomal subunit protein mL51 (MRPL51), found in Homo sapiens (Human).